Reading from the N-terminus, the 340-residue chain is Ketol-acid reductoisomerase (NADP(+)) (340 aa).

A KARI N-terminal Rossmann domain is found at 1-182 (MRVYYDRDCD…GGGRSGIIET (182 aa)). Residues 24–27 (YGSQ), R48, S51, S53, and 83–86 (DELQ) contribute to the NADP(+) site. H108 is a catalytic residue. G134 contributes to the NADP(+) binding site. Residues 183 to 329 (NFREECETDL…KELRGMMPWI (147 aa)) enclose the KARI C-terminal knotted domain. Mg(2+)-binding residues include D191, E195, E227, and E231. S252 contacts substrate.

Belongs to the ketol-acid reductoisomerase family. Requires Mg(2+) as cofactor.

It catalyses the reaction (2R)-2,3-dihydroxy-3-methylbutanoate + NADP(+) = (2S)-2-acetolactate + NADPH + H(+). It carries out the reaction (2R,3R)-2,3-dihydroxy-3-methylpentanoate + NADP(+) = (S)-2-ethyl-2-hydroxy-3-oxobutanoate + NADPH + H(+). It participates in amino-acid biosynthesis; L-isoleucine biosynthesis; L-isoleucine from 2-oxobutanoate: step 2/4. Its pathway is amino-acid biosynthesis; L-valine biosynthesis; L-valine from pyruvate: step 2/4. In terms of biological role, involved in the biosynthesis of branched-chain amino acids (BCAA). Catalyzes an alkyl-migration followed by a ketol-acid reduction of (S)-2-acetolactate (S2AL) to yield (R)-2,3-dihydroxy-isovalerate. In the isomerase reaction, S2AL is rearranged via a Mg-dependent methyl migration to produce 3-hydroxy-3-methyl-2-ketobutyrate (HMKB). In the reductase reaction, this 2-ketoacid undergoes a metal-dependent reduction by NADPH to yield (R)-2,3-dihydroxy-isovalerate. The chain is Ketol-acid reductoisomerase (NADP(+)) from Dinoroseobacter shibae (strain DSM 16493 / NCIMB 14021 / DFL 12).